Reading from the N-terminus, the 705-residue chain is Beta-xylosidase (705 aa).

It belongs to the glycosyl hydrolase 52 family.

The enzyme catalyses Hydrolysis of (1-&gt;4)-beta-D-xylans, to remove successive D-xylose residues from the non-reducing termini.. It participates in glycan degradation; xylan degradation. This is Beta-xylosidase (xylA) from Geobacillus stearothermophilus (Bacillus stearothermophilus).